A 326-amino-acid polypeptide reads, in one-letter code: tRNA(Ile)-lysidine synthase (326 aa).

25–30 contributes to the ATP binding site; the sequence is SGGQDS.

The protein belongs to the tRNA(Ile)-lysidine synthase family.

It localises to the cytoplasm. It carries out the reaction cytidine(34) in tRNA(Ile2) + L-lysine + ATP = lysidine(34) in tRNA(Ile2) + AMP + diphosphate + H(+). In terms of biological role, ligates lysine onto the cytidine present at position 34 of the AUA codon-specific tRNA(Ile) that contains the anticodon CAU, in an ATP-dependent manner. Cytidine is converted to lysidine, thus changing the amino acid specificity of the tRNA from methionine to isoleucine. This chain is tRNA(Ile)-lysidine synthase, found in Prochlorococcus marinus (strain NATL1A).